A 599-amino-acid polypeptide reads, in one-letter code: Elongation factor 4 (599 aa).

One can recognise a tr-type G domain in the interval 5-187; the sequence is SHIRNFSIVA…SIVQNLPAPK (183 aa). GTP-binding positions include 17–22 and 134–137; these read DHGKST and NKID.

The protein belongs to the TRAFAC class translation factor GTPase superfamily. Classic translation factor GTPase family. LepA subfamily.

The protein resides in the cell inner membrane. The catalysed reaction is GTP + H2O = GDP + phosphate + H(+). Required for accurate and efficient protein synthesis under certain stress conditions. May act as a fidelity factor of the translation reaction, by catalyzing a one-codon backward translocation of tRNAs on improperly translocated ribosomes. Back-translocation proceeds from a post-translocation (POST) complex to a pre-translocation (PRE) complex, thus giving elongation factor G a second chance to translocate the tRNAs correctly. Binds to ribosomes in a GTP-dependent manner. The sequence is that of Elongation factor 4 from Roseobacter denitrificans (strain ATCC 33942 / OCh 114) (Erythrobacter sp. (strain OCh 114)).